The primary structure comprises 202 residues: Protein cuti-1 (202 aa).

Residues 1-37 lie on the Cytoplasmic side of the membrane; that stretch reads MPNDRVAPLPPNFVYSPHDKFYYAPATCNSMHYTTAS. The helical transmembrane segment at 38–58 threads the bilayer; sequence YISAFIEFLVMGTGAICFYVM. Residues 59–68 are Extracellular-facing; it reads SHKSDSIGKW. A helical membrane pass occupies residues 69–89; it reads LFYIQAGITVLSLLTSALMAF. Topologically, residues 90–107 are cytoplasmic; it reads GLWKENPQMLGSKLKFIE. The helical transmembrane segment at 108–128 threads the bilayer; it reads FIICFLLIWAVISIVCMAFGI. At 129 to 148 the chain is on the extracellular side; sequence QFTRQVFGIFGKVHRIEQDY. The chain crosses the membrane as a helical span at residues 149–169; that stretch reads GPIWPFNIAVVSFFTAAIAIW. The Cytoplasmic segment spans residues 170–202; sequence TRIIIQGAADYLYDKAYFADKQNVELRESSKTR.

In terms of assembly, interacts with vps-39.

The protein resides in the cell membrane. The protein localises to the cytoplasm. Involved in cuticle formation and ensures cuticle shedding during larval development. Plays a role in maintaining the hypodermis. In association with vps-39, may play a role in vesicle tethering. The sequence is that of Protein cuti-1 from Caenorhabditis elegans.